The following is a 453-amino-acid chain: UDP-glucose 6-dehydrogenase (453 aa).

NAD(+) is bound by residues 2-19 (RLCV…AACF), Val11, Thr121, and Glu158. Substrate-binding positions include 154-158 (EFLKE), Lys210, Asn214, 255-259 (FIYAG), and Gly263. Cys266 serves as the catalytic Nucleophile. Lys269 is an NAD(+) binding site. Lys327 contributes to the substrate binding site. Arg334 serves as a coordination point for NAD(+).

Belongs to the UDP-glucose/GDP-mannose dehydrogenase family.

It carries out the reaction UDP-alpha-D-glucose + 2 NAD(+) + H2O = UDP-alpha-D-glucuronate + 2 NADH + 3 H(+). It functions in the pathway nucleotide-sugar biosynthesis; UDP-alpha-D-glucuronate biosynthesis; UDP-alpha-D-glucuronate from UDP-alpha-D-glucose: step 1/1. The protein operates within bacterial outer membrane biogenesis; lipopolysaccharide biosynthesis. The polypeptide is UDP-glucose 6-dehydrogenase (udg) (Pseudomonas aeruginosa (strain ATCC 15692 / DSM 22644 / CIP 104116 / JCM 14847 / LMG 12228 / 1C / PRS 101 / PAO1)).